An 843-amino-acid chain; its full sequence is Alpha-L-fucosidase 2 (843 aa).

The first 27 residues, 1–27 (MAEKSSFFVHFSCLLLLLTIIITCGEG), serve as a signal peptide directing secretion. N-linked (GlcNAc...) asparagine glycans are attached at residues Asn62, Asn253, Asn365, and Asn605.

It belongs to the glycosyl hydrolase 95 family. Ubiquitous. Highest expression in vascular tissues, leaf trichomes, root elongation zone and emerging lateral roots.

The protein localises to the secreted. It is found in the extracellular space. The protein resides in the apoplast. It carries out the reaction an alpha-L-fucoside + H2O = L-fucose + an alcohol. Its function is as follows. Hydrolyzes alpha-1,2-linked fucose. Also active on fucosylated xyloglucan oligosaccharides. No activity with 3-fucosyllactose, p-nitrophenyl-alpha-I-fucopyranoside, lacto-N-fucopentaose II, lacto-N-fucopentaose III or alpha 1,6-fucosylated chitopentaose. Involved in apoplastic xyloglucan metabolism. The polypeptide is Alpha-L-fucosidase 2 (FUC95A) (Arabidopsis thaliana (Mouse-ear cress)).